We begin with the raw amino-acid sequence, 176 residues long: Large ribosomal subunit protein uL6 (176 aa).

A compositionally biased stretch (basic and acidic residues) spans 153–170; the sequence is PEPYKGKGIRYGDEEVRR. Residues 153 to 176 are disordered; the sequence is PEPYKGKGIRYGDEEVRRKEAKKK.

Belongs to the universal ribosomal protein uL6 family. In terms of assembly, part of the 50S ribosomal subunit.

In terms of biological role, this protein binds to the 23S rRNA, and is important in its secondary structure. It is located near the subunit interface in the base of the L7/L12 stalk, and near the tRNA binding site of the peptidyltransferase center. This is Large ribosomal subunit protein uL6 from Chromohalobacter salexigens (strain ATCC BAA-138 / DSM 3043 / CIP 106854 / NCIMB 13768 / 1H11).